Consider the following 3491-residue polypeptide: MSGPRSRTTSRRTPVRIGAVVVASSTSELLDGLAAVADGRPHASVVRGVARPSAPVVFVFPGQGAQWAGMAGELLGESRVFAAAMDACARAFEPVTDWTLAQVLDSPEQSRRVEVVQPALFAVQTSLAALWRSFGVTPDAVVGHSIGELAAAHVCGAAGAADAARAAALWSREMIPLVGNGDMAAVALSADEIEPRIARWDDDVVLAGVNGPRSVLLTGSPEPVARRVQELSAEGVRAQVINVSMAAHSAQVDDIAEGMRSALAWFAPGGSEVPFYASLTGGAVDTRELVADYWRRSFRLPVRFDEAIRSALEVGPGTFVEASPHPVLAAALQQTLDAEGSSAAVVPTLQRGQGGMRRFLLAAAQAFTGGVAVDWTAAYDDVGPNPALCRSSRRPRRKTSRPSPASTGTRHRTCCERLLAVVNGETAALAGREADAEATFRELGLDSVLAAQLRAKVSAAIGREVNIALLYDHPTPRALAEALAAGTEVAQRETRARTNEAAPGEPVAVVAMACRLPGGVSTPEEFWELLSEGRDAVAGLPTDRGWDLDSLFHPDPTRSGTAHQRGGGFLTEATAFDPAFFGMSPREALAVDPQQRLMLELSWEVLERAGIPPTSLQASPTGVFVGLIPQEYGPRLAEGGEGVEGYLMTGTTTSVASGRIAYTLGLEGPAISVDTACSSSLVAVHLACQSLRRGESSLAMAGGVTVMPTPGMLVDFSRMNSLAPDGRCKAFSAGANGFGMAEGAGMLLLERLSDARRNGHPVLAVLRGTAVNSDGASNGLSAPNGRAQVRVIQQALAESGLGPADIDAVEAHGTGTRLGDPIEARALFEAYGRDREQPLHLGSVKSNLGHTQAAAGVAGVIKMVLAMRAGTLPRTLHASERSKEIDWSSGAISLLDEPEPWPAGARPRRAGVSSFGISGTNAHAIIEEAPQVVEGERVEAGDVVAPWVLSASSAEGLRAQAARLAAHLREHPGQDPRDIAYSLATGRAALPHRAAFAPVDESAALRVLDGLATGNADGAAVGTSRAQQRAVFVFPGQGWQWAGMAVDLLDTSPVFAAALRECADALEPHLDFEVIPFLRAEAARREQDAALSTERVDVVQPVMFAVMVSLASMWRAHGVEPAAVIGHSQGEIAAACVAGALSLDDAARVVALRSRVIATMPGNKGMASIAAPAGEVRARIGDRVEIAAVNGPRSVVVAGDSDELDRLVASCTTECIRAKRLAVDYASHSSHVETIRDALHAELGEDFHPLPGFVPFFSTVTGRWTQPDELDAGYWYRNLRRTVRFADAVRALAEQGYRTFLEVSAHPILTAAIEEIGDGSGADLSAIHSLRRGDGSLADFGEALSRAFAAGVAVDWESVHLGTGARRVPLPTYPFQRERVWLEPKPVARRSTEVDEVSALRYRIEWRPTGAGEPARLDGTWLVAKYAGTADETSTAAREALESAGARVRELVVDARCGRDELAERLRSVGEVAGVLSLLAVDEAEPEEAPLALASLADTLSLVQAMVSAELGCPLWTVTESAVATGPFERVRNAAHGALWGVGRVIALENPAVWGGLVDVPAGSVAELARHLAAVVSGGAGEDQLALRADGVYGRRWVRAAAPATDDEWKPTGTVLVTGGTGGVGGQIARWLARRGAPHLLLVSRSGPDADGAGELVAELEALGARTTVAACDVTDRESVRELLGGIGDDVPLSAVFHAAATLDDGTVDTLTGERIERASRAKVLGARNLHELTRELDLTAFVLFSSFASAFGAPGLGGYAPGNAYLDGLAQQRRSDGLPATAVAWGTWAGSGMAEGAVADRFRRHGVIEMPPETACRALQNALDRAEVCPIVIDVRWDRFLLAYTAQRPTRLFDEIDDARRAAPQAPAEPRVGALASLPAPEREEALFELVRSHAAAVLGHASAERVPADQAFAELGVDSLSALELRNRLGAATGVRLPTTTVFDHPDVRTLAAHLAAELGGATGAEQAAPATTAPVDEPIAIVGMACRLPGEVDSPERLWELITSGRDSAAEVPDDRGWVPDELMASDAAGTRAHGNFMAGAGDFDAAFFGISPREALAMDPQQRQALETTWEALESAGIPPETLRGSDTGVFVGMSHQGYATGRPRPEDGVDGYLLTGNTASVASGRIAYVLGLEGPALTVDTACSSSLVALHTACGSLRDGDCGLAVAGGVSVMAGPEVFTEFSRQGALSPDGRCKPFSDEADGFGLGEGSAFVVLQRLSDARREGRRVLGVVAGSAVNQDGASNGLSAPSGVAQQRVIRRAWARAGITGADVAVVEAHGTGTRLGDPVEASALLATYGKSRGSSGPVLLGSVKSNIGHAQAAAGVAGVIKVLLGLERGVVPPMLCRGERSGLIDWSSGEIELADGVREWSPAADGVRRAGVSAFGVSGTNAHVIIAEPPEPEPVPQPRRMLPATGVVPVVLSARTGAALRAQAGRLADHLAAHPGIAPADVSWTMARARQHFEERAAVLAADTAEAVHRLRAVADGAVVPGVVTGSASDGGSVFVFPGQGAQWEGMARELLPVPVFAESIAECDAVLSEVAGFSVSEVLEPRPDAPSLERVDVVQPVLFAVMVSLARLWRACGAVPSAVIGHSQGEIAAAVVAGALSLEDGMRVVARRSRAVRAVAGRGSMLSVRGGRSDVEKLLADDSWTGRLEVAAVNGPDAVVVAGDAQAAREFLEYCEGVGIRARAIPVDYASHTAHVEPVRDELVQALAGITPRRAEVPFFSTLTGDFLDGTELDAGYWYRNLRHPVEFHSAVQALTDQGYATFIEVSPHPVLASSVQETLDDAESDAAVLGTLERDAGDADRFLTALADAHTRGVAVDWEAVLGRAGLVDLPGYPFQGKRFWLLPDRTTPRDELDGWFYRVDWTEVPRSEPAALRGRWLVVVPEGHEEDGWTVEVRSALAEAGAEPEVTRGVGGLVGDCAGVVSLLALEGDGAVQTLVLVRELDAEGIDAPLWTVTFGAVDAGSPVARPDQAKLWGLGQVASLERGPRWTGLVDLPHMPDPELRGRLTAVLAGSEDQVAVRADAVRARRLSPAHVTATSEYAVPGGTILVTGGTAGLGAEVARWLAGRGAEHLALVSRRGPDTEGVGDLTAELTRLGARVSVHACDVSSREPVRELVHGLIEQGDVVRGVVHAAGLPQQVAINDMDEAAFDEVVAAKAGGAVHLDELCSDAELFLLFSSGAGVWGSARQGAYAAGNAFLDAFARHRRGRGLPATSVAWGLWAAGGMTGDEEAVSFLRERGVRAMPVPRALAALDRVLASGETAVVVTDVDWPAFAESYTAARPRPLLDRIVTTAPSERAGEPETESLRDRLAGLPRAERTAELVRLVRTSTATVLGHDDPKAVRATTPFKELGFDSLAAVRLRNLLNAATGLRLPSTLVFDHPNASAVAGFLDAELGTEVRGEAPSALAGLDALEGALPEVPATEREELVQRLERMLAALRPVAQAADASGTGANPSGDDLGEAGVDELLEALGRELDGD.

The interval 1–484 (MSGPRSRTTS…TPRALAEALA (484 aa)) is loading domain. The tract at residues 57-372 (VFVFPGQGAQ…AAQAFTGGVA (316 aa)) is acyltransferase 1. The Acyl-ester intermediate; for acyltransferase 1 activity role is filled by serine 145. Residues 386-410 (PALCRSSRRPRRKTSRPSPASTGTR) form a disordered region. Positions 391-400 (SSRRPRRKTS) are enriched in basic residues. The region spanning 412-487 (RTCCERLLAV…ALAEALAAGT (76 aa)) is the Carrier 1 domain. An O-(pantetheine 4'-phosphoryl)serine modification is found at serine 447. Residues 504-928 (GEPVAVVAMA…GTNAHAIIEE (425 aa)) form the Ketosynthase family 3 (KS3) 1 domain. 2 module regions span residues 507-1958 (VAVV…AHLA) and 1982-3404 (IAIV…GFLD). Cysteine 677 acts as the Acyl-thioester intermediate; for beta-ketoacyl synthase 1 activity in catalysis. Active-site for beta-ketoacyl synthase 1 activity residues include histidine 812 and histidine 850. The interval 1031–1352 (VFVFPGQGWQ…ALSRAFAAGV (322 aa)) is acyltransferase 2. Serine 1128 serves as the catalytic Acyl-ester intermediate; for acyltransferase 2 activity. The interval 1613-1790 (GTVLVTGGTG…ATAVAWGTWA (178 aa)) is beta-ketoacyl reductase 1. NADP(+) is bound by residues 1621–1624 (TGGV), 1644–1647 (SRSG), 1673–1674 (DV), lysine 1723, and 1745–1746 (FS). The active-site For beta-ketoacyl reductase 1 activity is the tyrosine 1760. Residues 1886-1961 (EALFELVRSH…TLAAHLAAEL (76 aa)) enclose the Carrier 2 domain. The residue at position 1921 (serine 1921) is an O-(pantetheine 4'-phosphoryl)serine. The 424-residue stretch at 1979-2402 (DEPIAIVGMA…GTNAHVIIAE (424 aa)) folds into the Ketosynthase family 3 (KS3) 2 domain. The active-site Acyl-thioester intermediate; for beta-ketoacyl synthase 2 activity is the cysteine 2148. Active-site for beta-ketoacyl synthase 2 activity residues include histidine 2283 and histidine 2323. Residues 2508-2827 (VFVFPGQGAQ…LADAHTRGVA (320 aa)) form an acyltransferase 3 region. The active-site Acyl-ester intermediate; for acyltransferase 3 activity is serine 2598. The interval 3057–3233 (GTILVTGGTA…ATSVAWGLWA (177 aa)) is beta-ketoacyl reductase 2. NADP(+) is bound by residues 3065-3068 (TAGL), 3088-3091 (SRRG), 3117-3118 (DV), lysine 3168, and 3188-3189 (FS). Residue tyrosine 3203 is the For beta-ketoacyl reductase 2 activity of the active site. The Carrier 3 domain maps to 3329 to 3407 (ERTAELVRLV…AVAGFLDAEL (79 aa)). Residue serine 3367 is modified to O-(pantetheine 4'-phosphoryl)serine. Residues 3456–3491 (QAADASGTGANPSGDDLGEAGVDELLEALGRELDGD) form a disordered region. Positions 3471–3481 (DLGEAGVDELL) are enriched in acidic residues.

As to quaternary structure, homodimer. Erythronolide synthase is composed of EryAI, EryAII and EryAIII multimodular (2 modules) polypeptides each coding for a functional synthase subunit which participates in 2 of the six FAS-like elongation steps required for formation of the polyketide. Module 1, 2, 3, 4, 5, and 6 participating in biosynthesis steps 1, 2, 3, 4, 5, and 6, respectively. It depends on pantetheine 4'-phosphate as a cofactor.

It catalyses the reaction 6 (S)-methylmalonyl-CoA + propanoyl-CoA + 6 NADPH + 12 H(+) = 6-deoxyerythronolide B + 6 CO2 + 6 NADP(+) + 7 CoA + H2O. It functions in the pathway antibiotic biosynthesis; erythromycin biosynthesis. In terms of biological role, involved in the biosynthesis of antibiotic erythromycin via the biosynthesis of its aglycone precursor, 6-deoxyerythronolide B (6-dEB). The protein is Erythronolide synthase EryA1 (eryA) of Saccharopolyspora erythraea (Streptomyces erythraeus).